A 332-amino-acid chain; its full sequence is 3-ketodihydrosphingosine reductase (332 aa).

The first 25 residues, 1-25, serve as a signal peptide directing secretion; the sequence is MLLLAAASLVAFVLLLYMVSPLISP. Residues 26-269 lie on the Cytoplasmic side of the membrane; the sequence is KPLALPGAHV…QGNFNSSIGS (244 aa). 7 residues coordinate NADPH: glycine 39, serine 41, serine 42, glycine 43, arginine 64, lysine 68, and aspartate 93. A GXSXG motif is present at residues 39 to 43; that stretch reads GGSSG. Residue serine 172 is the Proton donor of the active site. Tyrosine 186 (proton acceptor) is an active-site residue. 2 residues coordinate NADP(+): tyrosine 186 and lysine 190. Residue lysine 190 is the Lowers pKa of active site Tyr of the active site. A helical transmembrane segment spans residues 270–290; that stretch reads DGYMLSSLTCGMAPVTSIMEG. The Lumenal portion of the chain corresponds to 291–292; it reads LQ. A helical transmembrane segment spans residues 293 to 313; sequence QVVTMGLFRTIALFYLGSFDS. The Cytoplasmic segment spans residues 314-331; it reads IVRRCMMQKAKLETVDKT.

This sequence belongs to the short-chain dehydrogenases/reductases (SDR) family.

Its subcellular location is the endoplasmic reticulum membrane. The enzyme catalyses sphinganine + NADP(+) = 3-oxosphinganine + NADPH + H(+). The protein operates within lipid metabolism; sphingolipid metabolism. Catalyzes the reduction of 3'-oxosphinganine (3-ketodihydrosphingosine/KDS) to sphinganine (dihydrosphingosine/DHS), the second step of de novo sphingolipid biosynthesis. The protein is 3-ketodihydrosphingosine reductase (KDSR) of Bos taurus (Bovine).